The following is a 175-amino-acid chain: Transcriptional regulator GadE (175 aa).

The 66-residue stretch at 109-174 (HKNSQLCFSH…DIVTLGITSY (66 aa)) folds into the HTH luxR-type domain. The H-T-H motif DNA-binding region spans 133–152 (ESNITSTLNISQQTLKIQKF).

In terms of biological role, regulates the expression of several genes involved in acid resistance. Required for the expression of gadA and gadBC, among others, regardless of media or growth conditions. Binds directly to the 20 bp GAD box found in the control regions of both loci. Could be involved in the regulation of the genes coding for the type III secretion system in enterohaemorragic strains. This chain is Transcriptional regulator GadE (gadE), found in Escherichia coli O157:H7.